A 383-amino-acid polypeptide reads, in one-letter code: Processive diacylglycerol beta-glucosyltransferase (383 aa).

The protein belongs to the glycosyltransferase 28 family. UgtP subfamily.

Its subcellular location is the cell membrane. The enzyme catalyses a 1,2-diacyl-3-O-(beta-D-glucopyranosyl)-sn-glycerol + UDP-alpha-D-glucose = a 1,2-diacyl-3-O-(beta-D-Glc-(1-&gt;6)-beta-D-Glc)-sn-glycerol + UDP + H(+). The catalysed reaction is a 1,2-diacyl-3-O-(beta-D-Glc-(1-&gt;6)-beta-D-Glc)-sn-glycerol + UDP-alpha-D-glucose = a 1,2-diacyl-3-O-(beta-D-Glc-(1-&gt;6)-beta-D-Glc-(1-&gt;6)-beta-D-Glc)-sn-glycerol + UDP + H(+). It carries out the reaction a 1,2-diacyl-sn-glycerol + UDP-alpha-D-glucose = a 1,2-diacyl-3-O-(beta-D-glucopyranosyl)-sn-glycerol + UDP + H(+). The protein operates within glycolipid metabolism; diglucosyl-diacylglycerol biosynthesis. Processive glucosyltransferase involved in the biosynthesis of both the bilayer- and non-bilayer-forming membrane glucolipids. Is able to successively transfer up to three glucosyl residues to diacylglycerol (DAG), thereby catalyzing the formation of beta-monoglucosyl-DAG (3-O-(beta-D-glucopyranosyl)-1,2-diacyl-sn-glycerol), beta-diglucosyl-DAG (3-O-(beta-D-glucopyranosyl-beta-(1-&gt;6)-D-glucopyranosyl)-1,2-diacyl-sn-glycerol) and beta-triglucosyl-DAG (3-O-(beta-D-glucopyranosyl-beta-(1-&gt;6)-D-glucopyranosyl-beta-(1-&gt;6)-D-glucopyranosyl)-1,2-diacyl-sn-glycerol). Beta-diglucosyl-DAG is the predominant glycolipid found in Bacillales and is also used as a membrane anchor for lipoteichoic acid (LTA). The protein is Processive diacylglycerol beta-glucosyltransferase of Bacillus pumilus (strain SAFR-032).